The chain runs to 37 residues: Bactericidin B-3 (37 aa).

At G37 the chain carries Glycine amide.

Belongs to the cecropin family.

The protein resides in the secreted. In terms of biological role, cecropins have lytic and antibacterial activity against several Gram-positive and Gram-negative bacteria. The protein is Bactericidin B-3 of Manduca sexta (Tobacco hawkmoth).